The sequence spans 407 residues: Histidine--tRNA ligase (407 aa).

It belongs to the class-II aminoacyl-tRNA synthetase family. In terms of assembly, homodimer.

It is found in the cytoplasm. The enzyme catalyses tRNA(His) + L-histidine + ATP = L-histidyl-tRNA(His) + AMP + diphosphate + H(+). The protein is Histidine--tRNA ligase of Wolbachia pipientis subsp. Culex pipiens (strain wPip).